A 763-amino-acid chain; its full sequence is Transferrin receptor protein 1 (763 aa).

Over 1–67 (MMDQARSAFS…KPKRFNGRLC (67 aa)) the chain is Cytoplasmic. The segment at 1-67 (MMDQARSAFS…KPKRFNGRLC (67 aa)) is mediates interaction with SH3BP4. Phosphoserine is present on residues Ser-10 and Ser-19. Tyr-20 is modified (phosphotyrosine). The Endocytosis signal motif lies at 20-23 (YTRF). Phosphothreonine is present on Thr-21. Ser-24 carries the post-translational modification Phosphoserine. Positions 58–61 (KPKR) match the Stop-transfer sequence motif. Cys-67 carries S-palmitoyl cysteine lipidation. Residues 68–88 (FAAIALVIFFLIGFMSGYLGY) form a helical; Signal-anchor for type II membrane protein membrane-spanning segment. Residues 89 to 763 (CKRVEQKEEC…GDIWNIDNEF (675 aa)) are Extracellular-facing. O-linked (GalNAc...) threonine glycosylation is present at Thr-104. In terms of domain architecture, PA spans 225–315 (SKPTEVSGKL…GTGDPYTPGF (91 aa)). Asn-253 and Asn-319 each carry an N-linked (GlcNAc...) asparagine glycan. The ligand-binding stretch occupies residues 572–763 (RLDTYEALTQ…GDIWNIDNEF (192 aa)). The Cell attachment site signature appears at 649 to 651 (RGD). N-linked (GlcNAc...) asparagine glycosylation is found at Asn-725 and Asn-730.

Belongs to the peptidase M28 family. M28B subfamily. Homodimer; disulfide-linked. Binds one transferrin molecule per subunit. Interacts with SH3BP4. Interacts with STEAP3; facilitates TFRC endocytosis in erythroid precursor cells. Post-translationally, stearoylated by ZDHHC6 which inhibits TFRC-mediated activation of the JNK pathway and promotes mitochondrial fragmentation. Stearoylation does not affect iron uptake. In terms of processing, N- and O-glycosylated, phosphorylated and palmitoylated.

The protein localises to the cell membrane. Its subcellular location is the melanosome. Its function is as follows. Cellular uptake of iron occurs via receptor-mediated endocytosis of ligand-occupied transferrin receptor into specialized endosomes. Endosomal acidification leads to iron release. The apotransferrin-receptor complex is then recycled to the cell surface with a return to neutral pH and the concomitant loss of affinity of apotransferrin for its receptor. Transferrin receptor is necessary for development of erythrocytes and the nervous system. Upon stimulation, positively regulates T and B cell proliferation through iron uptake. Acts as a lipid sensor that regulates mitochondrial fusion by regulating activation of the JNK pathway. When dietary levels of stearate (C18:0) are low, promotes activation of the JNK pathway, resulting in HUWE1-mediated ubiquitination and subsequent degradation of the mitofusin MFN2 and inhibition of mitochondrial fusion. When dietary levels of stearate (C18:0) are high, TFRC stearoylation inhibits activation of the JNK pathway and thus degradation of the mitofusin MFN2. Mediates uptake of NICOL1 into fibroblasts where it may regulate extracellular matrix production. The sequence is that of Transferrin receptor protein 1 (Tfrc) from Mus musculus (Mouse).